We begin with the raw amino-acid sequence, 162 residues long: Cyclic pyranopterin monophosphate synthase (162 aa).

Residues 75-77 (LCH) and 113-114 (ME) each bind substrate. Residue Asp128 is part of the active site.

It belongs to the MoaC family. Homohexamer; trimer of dimers.

It carries out the reaction (8S)-3',8-cyclo-7,8-dihydroguanosine 5'-triphosphate = cyclic pyranopterin phosphate + diphosphate. Its pathway is cofactor biosynthesis; molybdopterin biosynthesis. In terms of biological role, catalyzes the conversion of (8S)-3',8-cyclo-7,8-dihydroguanosine 5'-triphosphate to cyclic pyranopterin monophosphate (cPMP). In Burkholderia vietnamiensis (strain G4 / LMG 22486) (Burkholderia cepacia (strain R1808)), this protein is Cyclic pyranopterin monophosphate synthase.